Here is a 184-residue protein sequence, read N- to C-terminus: MVRKLKFHEQKLLKQVDFLNWEVTDHNLHELRVLRRYRLQRREEYTRYNQLSRAVRELARRLRDLPERDPFRVRASAALLDKLYAMGLVPTRGSLELCDSVSASSFCRRRLPTLLLKLRMAQHLQAAVAFVEQGHVRVGPDVVTDPAFLVTRSMEDFVTWVDSSKIKRHVLEYNEERDDFDLDA.

An S4 RNA-binding domain is found at 109–175 (RRLPTLLLKL…IKRHVLEYNE (67 aa)).

The protein belongs to the universal ribosomal protein uS4 family. As to quaternary structure, part of the small subunit (SSU) processome, composed of more than 70 proteins and the RNA chaperone small nucleolar RNA (snoRNA) U3. Component of a heterotrimeric complex containing IMP3, IMP4 and MPHOSPH10. Interacts with MPHOSPH10.

It localises to the nucleus. The protein localises to the nucleolus. Functionally, component of the 60-80S U3 small nucleolar ribonucleoprotein (U3 snoRNP). Required for the early cleavages during pre-18S ribosomal RNA processing. Part of the small subunit (SSU) processome, first precursor of the small eukaryotic ribosomal subunit. During the assembly of the SSU processome in the nucleolus, many ribosome biogenesis factors, an RNA chaperone and ribosomal proteins associate with the nascent pre-rRNA and work in concert to generate RNA folding, modifications, rearrangements and cleavage as well as targeted degradation of pre-ribosomal RNA by the RNA exosome. The sequence is that of U3 small nucleolar ribonucleoprotein protein IMP3 (Imp3) from Mus musculus (Mouse).